The following is a 664-amino-acid chain: Glycine--tRNA ligase beta subunit (664 aa).

It belongs to the class-II aminoacyl-tRNA synthetase family. As to quaternary structure, tetramer of two alpha and two beta subunits.

Its subcellular location is the cytoplasm. The catalysed reaction is tRNA(Gly) + glycine + ATP = glycyl-tRNA(Gly) + AMP + diphosphate. The polypeptide is Glycine--tRNA ligase beta subunit (Rickettsia peacockii (strain Rustic)).